The chain runs to 154 residues: Large ribosomal subunit protein bL17 (154 aa).

The disordered stretch occupies residues 125–154 (AASQKSSKQDRAKRVQGSKKNVDAVAESAE).

Belongs to the bacterial ribosomal protein bL17 family. In terms of assembly, part of the 50S ribosomal subunit. Contacts protein L32.

The chain is Large ribosomal subunit protein bL17 from Chlorobium chlorochromatii (strain CaD3).